The following is a 242-amino-acid chain: Protein FsrB (242 aa).

Helical transmembrane passes span 29-49 (LTVY…SVLF), 52-72 (LSET…AGGW), 78-95 (WLCR…PFVL), 100-120 (VSLP…LFYW), and 160-180 (KIAS…LPVT).

It belongs to the AgrB family.

The protein localises to the cell membrane. Functionally, may be involved in the proteolytic processing of a quorum sensing system signal molecule precursor required for the regulation of the virulence genes for gelatinase (gelE) and a serine protease (sprE). The chain is Protein FsrB (fsrB) from Enterococcus faecalis (strain ATCC 47077 / OG1RF).